A 581-amino-acid polypeptide reads, in one-letter code: Putative ABC transporter ATP-binding protein MM_1996 (581 aa).

The region spanning 10-250 (IEIRDLWYTY…LEVFHRLGLR (241 aa)) is the ABC transporter 1 domain. 44–51 (GPTGCGKS) serves as a coordination point for ATP. Residues 287-309 (GDYPASPGRKEKTSSPGWSSENN) form a disordered region. The span at 300–309 (SSPGWSSENN) shows a compositional bias: polar residues. In terms of domain architecture, ABC transporter 2 spans 313–541 (VSVRDLWSGY…IDILRKASLT (229 aa)). ATP is bound at residue 346-353 (GTNGSGKS).

It belongs to the ABC transporter superfamily.

Its subcellular location is the cell membrane. Its function is as follows. Probably part of an ABC transporter complex. Responsible for energy coupling to the transport system. The protein is Putative ABC transporter ATP-binding protein MM_1996 of Methanosarcina mazei (strain ATCC BAA-159 / DSM 3647 / Goe1 / Go1 / JCM 11833 / OCM 88) (Methanosarcina frisia).